Consider the following 539-residue polypeptide: Chaperonin GroEL (539 aa).

Residues 29–32, 86–90, glycine 413, 477–479, and aspartate 493 each bind ATP; these read TLGP, DGTTT, and NAA.

Belongs to the chaperonin (HSP60) family. As to quaternary structure, forms a cylinder of 14 subunits composed of two heptameric rings stacked back-to-back. Interacts with the co-chaperonin GroES.

The protein localises to the cytoplasm. The enzyme catalyses ATP + H2O + a folded polypeptide = ADP + phosphate + an unfolded polypeptide.. Its function is as follows. Together with its co-chaperonin GroES, plays an essential role in assisting protein folding. The GroEL-GroES system forms a nano-cage that allows encapsulation of the non-native substrate proteins and provides a physical environment optimized to promote and accelerate protein folding. This Leifsonia xyli subsp. xyli (strain CTCB07) protein is Chaperonin GroEL.